A 131-amino-acid chain; its full sequence is Histone H2A.2 (131 aa).

Positions Met-1–Ala-22 are disordered. At Ser-2 the chain carries N-acetylserine. Lys-5 and Lys-7 each carry N6-acetyllysine. N5-methylglutamine is present on Gln-105. Ser-128 carries the post-translational modification Phosphoserine. The [ST]-Q motif signature appears at Ser-128–Gln-129.

Belongs to the histone H2A family. As to quaternary structure, the nucleosome is a histone octamer containing two molecules each of H2A, H2B, H3 and H4 assembled in one H3-H4 heterotetramer and two H2A-H2B heterodimers. The octamer wraps approximately 147 bp of DNA. In terms of processing, phosphorylated to form H2AS128ph (gamma-H2A) in response to DNA double-strand breaks (DSBs) generated by exogenous genotoxic agents and by stalled replication forks. Phosphorylation is dependent on the DNA damage checkpoint kinases MEC1/ATR and TEL1/ATM, spreads on either side of a detected DSB site and may mark the surrounding chromatin for recruitment of proteins required for DNA damage signaling and repair. Gamma-H2A is removed from the DNA prior to the strand invasion-primer extension step of the repair process and subsequently dephosphorylated. Dephosphorylation is necessary for efficient recovery from the DNA damage checkpoint. Post-translationally, acetylated by ESA1 to form H2AK4ac and H2AK7ac.

The protein resides in the nucleus. It is found in the chromosome. Core component of nucleosome which plays a central role in DNA double strand break (DSB) repair. Nucleosomes wrap and compact DNA into chromatin, limiting DNA accessibility to the cellular machineries which require DNA as a template. Histones thereby play a central role in transcription regulation, DNA repair, DNA replication and chromosomal stability. DNA accessibility is regulated via a complex set of post-translational modifications of histones, also called histone code, and nucleosome remodeling. In Debaryomyces hansenii (strain ATCC 36239 / CBS 767 / BCRC 21394 / JCM 1990 / NBRC 0083 / IGC 2968) (Yeast), this protein is Histone H2A.2 (HTA2).